The chain runs to 395 residues: MESFLFTSESVNEGHPDKLCDQVSDAVLDACLAQDPDSKVACETCTKTNMVMVFGEITTKANIDYEKIVRDTCRSIGFVSADVGLDADNCKVLVNIEQQSPDIAQGVHGHLTKRPEDVGAGDQGHMFGYATDETPELMPLSHVLATKLGARLTEVRKNGTCAWLRPDGKTQVTVEYNNDNGAMVPIRVHTVLISTQHDETVTNEQIAADLKEHVIKPVIPEKYLDDKTIFHLNPSGRFVIGGPHGDAGLTGRKIIIDTYGGWGAHGGGAFSGKDPTKVDRSGAYIVRQAAKSIVANGLARRAIVQVSYAIGVPEPLSVFVDTYGTGKIPDKDILKIVKENFDFRPGMISINLDLKRGGNARFQKTAAYGHFGRDDPDFTWETVKPLKWEKVPASS.

A Mg(2+)-binding site is contributed by Glu-9. His-15 serves as a coordination point for ATP. Glu-43 provides a ligand contact to K(+). Glu-56 and Gln-99 together coordinate L-methionine. ATP is bound by residues 167-169, 235-238, Asp-246, 252-253, Ala-269, Lys-273, and Lys-277; these read DGK, SGRF, and RK. Asp-246 provides a ligand contact to L-methionine. Residue Lys-277 coordinates L-methionine.

Belongs to the AdoMet synthase family. In terms of assembly, homotetramer. It depends on Mn(2+) as a cofactor. Mg(2+) serves as cofactor. Requires Co(2+) as cofactor. The cofactor is K(+).

It localises to the cytoplasm. It catalyses the reaction L-methionine + ATP + H2O = S-adenosyl-L-methionine + phosphate + diphosphate. Its pathway is amino-acid biosynthesis; S-adenosyl-L-methionine biosynthesis; S-adenosyl-L-methionine from L-methionine: step 1/1. Functionally, catalyzes the formation of S-adenosylmethionine from methionine and ATP. The reaction comprises two steps that are both catalyzed by the same enzyme: formation of S-adenosylmethionine (AdoMet) and triphosphate, and subsequent hydrolysis of the triphosphate. This is S-adenosylmethionine synthase 2 (METK2) from Suaeda salsa (Seepweed).